We begin with the raw amino-acid sequence, 259 residues long: 5'-nucleotidase SurE (259 aa).

Residues Asp8, Asp9, Ser40, and Asn92 each coordinate a divalent metal cation.

The protein belongs to the SurE nucleotidase family. The cofactor is a divalent metal cation.

Its subcellular location is the cytoplasm. It catalyses the reaction a ribonucleoside 5'-phosphate + H2O = a ribonucleoside + phosphate. In terms of biological role, nucleotidase that shows phosphatase activity on nucleoside 5'-monophosphates. The protein is 5'-nucleotidase SurE of Xanthomonas euvesicatoria pv. vesicatoria (strain 85-10) (Xanthomonas campestris pv. vesicatoria).